The following is a 221-amino-acid chain: Cytidylate kinase (221 aa).

7–15 (GPSASGKSS) provides a ligand contact to ATP.

Belongs to the cytidylate kinase family. Type 1 subfamily.

Its subcellular location is the cytoplasm. The enzyme catalyses CMP + ATP = CDP + ADP. It catalyses the reaction dCMP + ATP = dCDP + ADP. The sequence is that of Cytidylate kinase from Borreliella burgdorferi (strain ZS7) (Borrelia burgdorferi).